The following is a 240-amino-acid chain: Dihydromonapterin reductase (240 aa).

Tyrosine 152 acts as the Proton acceptor in catalysis.

This sequence belongs to the short-chain dehydrogenases/reductases (SDR) family. FolM subfamily.

It catalyses the reaction (6S)-5,6,7,8-tetrahydrofolate + NADP(+) = 7,8-dihydrofolate + NADPH + H(+). It carries out the reaction 7,8-dihydromonapterin + NADPH + H(+) = 5,6,7,8-tetrahydromonapterin + NADP(+). In terms of biological role, catalyzes the reduction of dihydromonapterin to tetrahydromonapterin. Also has lower activity with dihydrofolate. The sequence is that of Dihydromonapterin reductase (folM) from Escherichia coli O6:H1 (strain CFT073 / ATCC 700928 / UPEC).